The sequence spans 429 residues: Dihydroorotase (429 aa).

2 residues coordinate Zn(2+): histidine 59 and histidine 61. Residues 61–63 and asparagine 93 contribute to the substrate site; that span reads HLR. Residues lysine 143, histidine 171, histidine 229, and aspartate 298 each contribute to the Zn(2+) site. An N6-carboxylysine modification is found at lysine 143. Residue aspartate 298 is part of the active site. Substrate contacts are provided by residues histidine 302 and 316 to 317; that span reads AG.

This sequence belongs to the metallo-dependent hydrolases superfamily. DHOase family. Class I DHOase subfamily. Requires Zn(2+) as cofactor.

The enzyme catalyses (S)-dihydroorotate + H2O = N-carbamoyl-L-aspartate + H(+). Its pathway is pyrimidine metabolism; UMP biosynthesis via de novo pathway; (S)-dihydroorotate from bicarbonate: step 3/3. Its function is as follows. Catalyzes the reversible cyclization of carbamoyl aspartate to dihydroorotate. The chain is Dihydroorotase from Methanosphaera stadtmanae (strain ATCC 43021 / DSM 3091 / JCM 11832 / MCB-3).